The chain runs to 175 residues: Co-chaperone protein HscB homolog (175 aa).

The region spanning 2-74 is the J domain; it reads NYFQLFNIEV…LQRAEYILVQ (73 aa).

Belongs to the HscB family. Interacts with HscA and stimulates its ATPase activity.

Its function is as follows. Co-chaperone involved in the maturation of iron-sulfur cluster-containing proteins. Seems to help targeting proteins to be folded toward HscA. The protein is Co-chaperone protein HscB homolog of Colwellia psychrerythraea (strain 34H / ATCC BAA-681) (Vibrio psychroerythus).